Consider the following 421-residue polypeptide: Serine hydroxymethyltransferase (421 aa).

(6S)-5,6,7,8-tetrahydrofolate-binding positions include leucine 121 and 125-127; that span reads GHL. An N6-(pyridoxal phosphate)lysine modification is found at lysine 229.

It belongs to the SHMT family. Homodimer. Requires pyridoxal 5'-phosphate as cofactor.

It localises to the cytoplasm. It carries out the reaction (6R)-5,10-methylene-5,6,7,8-tetrahydrofolate + glycine + H2O = (6S)-5,6,7,8-tetrahydrofolate + L-serine. It participates in one-carbon metabolism; tetrahydrofolate interconversion. It functions in the pathway amino-acid biosynthesis; glycine biosynthesis; glycine from L-serine: step 1/1. In terms of biological role, catalyzes the reversible interconversion of serine and glycine with tetrahydrofolate (THF) serving as the one-carbon carrier. This reaction serves as the major source of one-carbon groups required for the biosynthesis of purines, thymidylate, methionine, and other important biomolecules. Also exhibits THF-independent aldolase activity toward beta-hydroxyamino acids, producing glycine and aldehydes, via a retro-aldol mechanism. The protein is Serine hydroxymethyltransferase of Actinobacillus pleuropneumoniae serotype 7 (strain AP76).